A 956-amino-acid chain; its full sequence is Plasma membrane ATPase 1 (956 aa).

The Cytoplasmic portion of the chain corresponds to methionine 1–phenylalanine 65. Residues leucine 66–isoleucine 85 traverse the membrane as a helical segment. The Extracellular portion of the chain corresponds to alanine 86–tryptophan 97. Residues glutamine 98–glutamate 118 traverse the membrane as a helical segment. At asparagine 119 to isoleucine 247 the chain is on the cytoplasmic side. A helical membrane pass occupies residues glycine 248 to proline 268. Topologically, residues isoleucine 269–glycine 277 are extracellular. The chain crosses the membrane as a helical span at residues isoleucine 278–threonine 295. At valine 296 to methionine 646 the chain is on the cytoplasmic side. Aspartate 333 functions as the 4-aspartylphosphate intermediate in the catalytic mechanism. Mg(2+)-binding residues include aspartate 592 and aspartate 596. Residues lysine 647 to leucine 666 traverse the membrane as a helical segment. Topologically, residues leucine 667 to aspartate 674 are extracellular. Residues phenylalanine 675 to aspartate 697 traverse the membrane as a helical segment. Residues arginine 698–isoleucine 713 lie on the Cytoplasmic side of the membrane. The helical transmembrane segment at phenylalanine 714 to alanine 734 threads the bilayer. Residues alanine 735–arginine 759 are Extracellular-facing. Residues lysine 760–threonine 780 form a helical membrane-spanning segment. Over arginine 781 to glycine 792 the chain is Cytoplasmic. Residues leucine 793 to alanine 813 form a helical membrane-spanning segment. The Extracellular portion of the chain corresponds to asparagine 814 to glutamate 821. The chain crosses the membrane as a helical span at residues glycine 822 to leucine 842. Over aspartate 843–valine 956 the chain is Cytoplasmic.

Belongs to the cation transport ATPase (P-type) (TC 3.A.3) family. Type IIIA subfamily. Possibly exists as a homodimer or a homotrimer.

It is found in the cell membrane. It catalyses the reaction ATP + H2O + H(+)(in) = ADP + phosphate + 2 H(+)(out). Its function is as follows. The plasma membrane ATPase of plants and fungi is a hydrogen ion pump. The proton gradient it generates drives the active transport of nutrients by H(+)-symport. The resulting external acidification and/or internal alkinization may mediate growth responses. This Solanum lycopersicum (Tomato) protein is Plasma membrane ATPase 1 (LHA1).